The following is a 344-amino-acid chain: Tripartite motif-containing protein 44 (344 aa).

Disordered regions lie at residues 1–25 (MASG…EPDE) and 66–165 (AWTP…EFDP). A compositionally biased stretch (basic and acidic residues) spans 75-92 (GAGKEEAEVKVEQEREIE). Positions 93–165 (SEAGEESESE…ETEAESEFDP (73 aa)) are enriched in acidic residues. The segment at 174–215 (VAKRKCPDHGLDLSTYCQEDRQLICVLCPVIGAHQGHQLSTL) adopts a B box-type zinc-finger fold. Residues C179, H182, C201, and H207 each coordinate Zn(2+). Positions 290 to 325 (AHVTEILADIQSHMDRLMTQMAQAKEQLDTSNESAE) form a coiled coil. The tract at residues 309–344 (QMAQAKEQLDTSNESAEPKAEGDEEGPSGASEEEDT) is disordered. Residues 330–344 (GDEEGPSGASEEEDT) show a composition bias toward acidic residues. Phosphoserine occurs at positions 336 and 339.

In terms of assembly, interacts (via coiled coil) with TRIM17 (via coiled coil). In terms of tissue distribution, highly expressed in testis.

May play a role in the process of differentiation and maturation of neuronal cells. May regulate the activity of TRIM17. Is a negative regulator of PAX6 expression. This Homo sapiens (Human) protein is Tripartite motif-containing protein 44 (TRIM44).